A 961-amino-acid chain; its full sequence is MGQGEELRAAVDSGGMGLLGTKCPLPLLLLFIMGGKALDSPPQILVHPQDQLLQGSGPAKMSCRASGQPLPTIRWLLNGQPLSMATPDLHYLQSDGTLLLHRPPTHGRPQDDQNILSAILGVYTCEASNRLGTAVSRGARLSVAVLQEDFRIQPRDTVAVVGESLVLECGPPWGYPKPSVSWWKDGKPLVLQPGKRTVSGDSLMVARAEKNDTGTYMCMATNNAGQRESRAARVSIQESPDHKEHLELLAVRIQLENVTLLNPEPVKGPKPGPAVWLSWKVSGPAAPAQSYTALFRAQRDPRDQGSPWTEVLLDGLLNAKLGGLRWGQDYEFKVRPSSGRARGPDSNVLLLRLPEQVPSAPPQEVTLRPGNGSVFVSWAPPPAENHNGFIRGYQVWSLGNASLPAANWTVVGEQTQLEIAARMPGSYCVQVAAVTGAGAGEPSIPVCLLLEQAMEQSARDPSKHVSWTLEQLRATLKRPEVIASGAVLLWLLLLGIAVCIYRRRKAGVHLGPGLYRYTSEDAILKHRMDHSDSPWLADTWRSTSGSRDLSSSSSLSSRLGVDPRDPLDGRRSLISWDPRSPGVPLLPDTSTFYGSLIAEQTSSPPVRPSPQTPAARRLPPKLTGTSSPWASSDSLCSRRGLCSPRMSLAPAEAWKAKKKQELHQANSSPLLQGSHPMEIWAWELGSRASKNLSQSPGPNTCSPREAPGAVVAWRALGPQLHRNSSELAARPLPPTPLSLRGAPSHDPQSQCVEKLQAPSSDPLPAAPLSVLNSSRPSSPQASFLSVPSPGSSNLSSSSLSSLEEEDQDSVLTPEEVALCLELSDGEETPTNSVSPMPRAPSPPATYGYISIPTSSGLADMGRAGGGVGSEVGNLLCPPRLCPTPTPSEGSLANGWGSASEDNVPSARASLVSSSDGSFLADAHFARALAVAVDSFGFSLEPREADCVFTGMWARPPPLEWT.

The first 37 residues, 1–37, serve as a signal peptide directing secretion; sequence MGQGEELRAAVDSGGMGLLGTKCPLPLLLLFIMGGKA. Ig-like C2-type domains are found at residues 42 to 142 and 148 to 235; these read PQIL…ARLS and EDFR…ARVS. 2 disulfide bridges follow: Cys63–Cys125 and Cys169–Cys218. N-linked (GlcNAc...) asparagine glycosylation is found at Asn211 and Asn257. Fibronectin type-III domains lie at 259–356 and 358–453; these read TLLN…LPEQ and PSAP…LEQA. 3 N-linked (GlcNAc...) asparagine glycosylation sites follow: Asn371, Asn400, and Asn407. A compositionally biased stretch (low complexity) spans 544 to 559; it reads SGSRDLSSSSSLSSRL. Disordered regions lie at residues 544–563 and 600–634; these read SGSRDLSSSSSLSSRLGVDP and QTSSPPVRPSPQTPAARRLPPKLTGTSSPWASSDS. A compositionally biased stretch (polar residues) spans 623-634; the sequence is TGTSSPWASSDS. Residues Asn691 and Asn723 are each glycosylated (N-linked (GlcNAc...) asparagine). Residues 726–810 form a disordered region; the sequence is ELAARPLPPT…SLEEEDQDSV (85 aa). A compositionally biased stretch (low complexity) spans 755–769; it reads LQAPSSDPLPAAPLS. A compositionally biased stretch (polar residues) spans 770 to 783; it reads VLNSSRPSSPQASF. Asn772 and Asn793 each carry an N-linked (GlcNAc...) asparagine glycan. Residues 784–801 show a composition bias toward low complexity; that stretch reads LSVPSPGSSNLSSSSLSS. Ser823 bears the Phosphoserine mark.

This sequence belongs to the immunoglobulin superfamily. ROBO family. In terms of assembly, interacts with SLIT2 and ENAH.

In terms of biological role, receptor for Slit proteins, at least for SLIT2, and seems to be involved in angiogenesis and vascular patterning. May mediate the inhibition of primary endothelial cell migration by Slit proteins. Involved in the maintenance of endothelial barrier organization and function. The polypeptide is Roundabout homolog 4 (Robo4) (Rattus norvegicus (Rat)).